The primary structure comprises 850 residues: Tripartite terminase subunit 1 (850 aa).

The C3H1-type zinc finger occupies 191–219; that stretch reads CAQCYEELTIIPNQGRSLNKRLQGLLCNH. The tract at residues 438-489 is disordered; the sequence is GTTLMTASNSSNSSTHSQRNNGGGGRARGGGKKVVGGGVNGQDGDGSENGLR. The segment covering 439–457 has biased composition (low complexity); the sequence is TTLMTASNSSNSSTHSQRN. The span at 458 to 481 shows a compositional bias: gly residues; it reads NGGGGRARGGGKKVVGGGVNGQDG. ATP is bound at residue 709–716; it reads YNETFGKQ. Residues 801–831 form a disordered region; that stretch reads WLPSPYPSSSTAGVSRRVRATRKRPRRASSL. Positions 816 to 827 are enriched in basic residues; it reads RRVRATRKRPRR. The Nuclear localization signal motif lies at 822-827; the sequence is RKRPRR.

Belongs to the herpesviridae TRM1 protein family. As to quaternary structure, associates with TRM2 and TRM3 to form the tripartite terminase complex. Interacts with portal protein.

It localises to the host nucleus. In terms of biological role, component of the molecular motor that translocates viral genomic DNA in empty capsid during DNA packaging. Forms a tripartite terminase complex together with TRM2 and TRM3 in the host cytoplasm. Once the complex reaches the host nucleus, it interacts with the capsid portal vertex. This portal forms a ring in which genomic DNA is translocated into the capsid. TRM1 carries an endonuclease activity that plays an important role for the cleavage of concatemeric viral DNA into unit length genomes. The sequence is that of Tripartite terminase subunit 1 from Homo sapiens (Human).